Consider the following 309-residue polypeptide: tRNA uridine(34) hydroxylase (309 aa).

One can recognise a Rhodanese domain in the interval 129–223 (SEPGTIVIDT…YLEEVPAEQS (95 aa)). C183 serves as the catalytic Cysteine persulfide intermediate. Residues 288 to 309 (YAERQRQVELAQARGKRPHIGS) are disordered.

This sequence belongs to the TrhO family.

The catalysed reaction is uridine(34) in tRNA + AH2 + O2 = 5-hydroxyuridine(34) in tRNA + A + H2O. Its function is as follows. Catalyzes oxygen-dependent 5-hydroxyuridine (ho5U) modification at position 34 in tRNAs. This is tRNA uridine(34) hydroxylase from Mesorhizobium japonicum (strain LMG 29417 / CECT 9101 / MAFF 303099) (Mesorhizobium loti (strain MAFF 303099)).